A 182-amino-acid chain; its full sequence is Cytidylate kinase (182 aa).

ATP is bound at residue 7–15 (GPPGSGKSS).

The protein belongs to the cytidylate kinase family. Type 2 subfamily.

The protein localises to the cytoplasm. It catalyses the reaction CMP + ATP = CDP + ADP. The catalysed reaction is dCMP + ATP = dCDP + ADP. The protein is Cytidylate kinase (cmk) of Sulfolobus acidocaldarius (strain ATCC 33909 / DSM 639 / JCM 8929 / NBRC 15157 / NCIMB 11770).